The chain runs to 470 residues: Neuraminidase (470 aa).

Residues 1–6 (MNPNQK) are Intravirion-facing. Residues 7–27 (IITIGSICMAIGIISLILQIG) form a helical membrane-spanning segment. The segment at 11–33 (GSICMAIGIISLILQIGNIISIW) is involved in apical transport and lipid raft association. Topologically, residues 28 to 470 (NIISIWVSHS…GAELPFTIDK (443 aa)) are virion surface. The segment at 36 to 90 (HSIQTGSQNHTGICNQRIITYENSTWVNQTYVNISNTNVVAGKDTTSMTLAGNSS) is hypervariable stalk region. Residues Asn44, Asn58, Asn63, Asn68, and Asn88 are each glycosylated (N-linked (GlcNAc...) asparagine; by host). The interval 91–470 (LCPIRGWAIY…GAELPFTIDK (380 aa)) is head of neuraminidase. Cystine bridges form between Cys92-Cys417, Cys124-Cys129, Cys184-Cys231, Cys233-Cys238, Cys279-Cys292, Cys281-Cys290, Cys318-Cys335, and Cys421-Cys447. Position 118 (Arg118) interacts with substrate. Residue Asn146 is glycosylated (N-linked (GlcNAc...) asparagine; by host). The active-site Proton donor/acceptor is Asp151. Residue Arg152 participates in substrate binding. Asn235 carries an N-linked (GlcNAc...) asparagine; by host glycan. Residue 277–278 (EE) coordinates substrate. Arg293 contributes to the substrate binding site. Ca(2+) contacts are provided by Asp294, Gly298, and Asp324. Residue Asn365 is glycosylated (N-linked (GlcNAc...) asparagine; by host). Arg368 is a substrate binding site. Tyr402 serves as the catalytic Nucleophile. A glycan (N-linked (GlcNAc...) asparagine; by host) is linked at Asn455.

This sequence belongs to the glycosyl hydrolase 34 family. In terms of assembly, homotetramer. Requires Ca(2+) as cofactor. N-glycosylated.

The protein resides in the virion membrane. Its subcellular location is the host apical cell membrane. It catalyses the reaction Hydrolysis of alpha-(2-&gt;3)-, alpha-(2-&gt;6)-, alpha-(2-&gt;8)- glycosidic linkages of terminal sialic acid residues in oligosaccharides, glycoproteins, glycolipids, colominic acid and synthetic substrates.. Its activity is regulated as follows. Inhibited by the neuraminidase inhibitors zanamivir (Relenza) and oseltamivir (Tamiflu). These drugs interfere with the release of progeny virus from infected cells and are effective against all influenza strains. Resistance to neuraminidase inhibitors is quite rare. Catalyzes the removal of terminal sialic acid residues from viral and cellular glycoconjugates. Cleaves off the terminal sialic acids on the glycosylated HA during virus budding to facilitate virus release. Additionally helps virus spread through the circulation by further removing sialic acids from the cell surface. These cleavages prevent self-aggregation and ensure the efficient spread of the progeny virus from cell to cell. Otherwise, infection would be limited to one round of replication. Described as a receptor-destroying enzyme because it cleaves a terminal sialic acid from the cellular receptors. May facilitate viral invasion of the upper airways by cleaving the sialic acid moieties on the mucin of the airway epithelial cells. Likely to plays a role in the budding process through its association with lipid rafts during intracellular transport. May additionally display a raft-association independent effect on budding. Plays a role in the determination of host range restriction on replication and virulence. Sialidase activity in late endosome/lysosome traffic seems to enhance virus replication. The chain is Neuraminidase from Influenza A virus (strain A/Brazil/11/1978 H1N1).